Reading from the N-terminus, the 346-residue chain is Putative agmatine deiminase (346 aa).

The Amidino-cysteine intermediate role is filled by C333.

This sequence belongs to the agmatine deiminase family.

The enzyme catalyses agmatine + H2O = N-carbamoylputrescine + NH4(+). This chain is Putative agmatine deiminase, found in Legionella pneumophila (strain Paris).